A 194-amino-acid polypeptide reads, in one-letter code: 7-methyl-GTP pyrophosphatase (194 aa).

Asp69 (proton acceptor) is an active-site residue.

Belongs to the Maf family. YceF subfamily. The cofactor is a divalent metal cation.

It localises to the cytoplasm. The catalysed reaction is N(7)-methyl-GTP + H2O = N(7)-methyl-GMP + diphosphate + H(+). Its function is as follows. Nucleoside triphosphate pyrophosphatase that hydrolyzes 7-methyl-GTP (m(7)GTP). May have a dual role in cell division arrest and in preventing the incorporation of modified nucleotides into cellular nucleic acids. This Sodalis glossinidius (strain morsitans) protein is 7-methyl-GTP pyrophosphatase.